Consider the following 372-residue polypeptide: Probable dual-specificity RNA methyltransferase RlmN (372 aa).

The active-site Proton acceptor is glutamate 106. Residues 112 to 359 (YPQRNTVCIS…SCTVRDTRGR (248 aa)) enclose the Radical SAM core domain. An intrachain disulfide couples cysteine 119 to cysteine 365. 3 residues coordinate [4Fe-4S] cluster: cysteine 126, cysteine 130, and cysteine 133. S-adenosyl-L-methionine contacts are provided by residues 186-187 (GE), serine 220, 243-245 (SLH), and asparagine 322. Cysteine 365 functions as the S-methylcysteine intermediate in the catalytic mechanism.

Belongs to the radical SAM superfamily. RlmN family. It depends on [4Fe-4S] cluster as a cofactor.

It is found in the cytoplasm. The enzyme catalyses adenosine(2503) in 23S rRNA + 2 reduced [2Fe-2S]-[ferredoxin] + 2 S-adenosyl-L-methionine = 2-methyladenosine(2503) in 23S rRNA + 5'-deoxyadenosine + L-methionine + 2 oxidized [2Fe-2S]-[ferredoxin] + S-adenosyl-L-homocysteine. The catalysed reaction is adenosine(37) in tRNA + 2 reduced [2Fe-2S]-[ferredoxin] + 2 S-adenosyl-L-methionine = 2-methyladenosine(37) in tRNA + 5'-deoxyadenosine + L-methionine + 2 oxidized [2Fe-2S]-[ferredoxin] + S-adenosyl-L-homocysteine. Functionally, specifically methylates position 2 of adenine 2503 in 23S rRNA and position 2 of adenine 37 in tRNAs. The polypeptide is Probable dual-specificity RNA methyltransferase RlmN (Mycolicibacterium smegmatis (strain ATCC 700084 / mc(2)155) (Mycobacterium smegmatis)).